The sequence spans 379 residues: uncharacterized protein (379 aa).

3 disordered regions span residues 1-20 (MLPQ…PVGP), 227-290 (VSQR…LQGH), and 331-371 (PGCA…RAGH). The segment covering 7 to 20 (QVVHGVQDGPPVGP) has biased composition (low complexity). Over residues 249-261 (GCKDPRVRKEPGR) the composition is skewed to basic and acidic residues.

This is an uncharacterized protein from Dryophytes versicolor (chameleon treefrog).